The following is a 353-amino-acid chain: Biotin synthase (353 aa).

The region spanning 51–270 (NEVQCNQLLN…IALARIMMPK (220 aa)) is the Radical SAM core domain. 3 residues coordinate [4Fe-4S] cluster: Cys66, Cys70, and Cys73. Residues Cys110, Cys141, Cys201, and Arg274 each coordinate [2Fe-2S] cluster. Residues 330 to 353 (APVEAHSHDHDHDHHDHHHGHSHS) are disordered. Basic and acidic residues predominate over residues 334 to 343 (AHSHDHDHDH). The segment covering 344 to 353 (HDHHHGHSHS) has biased composition (basic residues).

It belongs to the radical SAM superfamily. Biotin synthase family. Homodimer. [4Fe-4S] cluster is required as a cofactor. It depends on [2Fe-2S] cluster as a cofactor.

The enzyme catalyses (4R,5S)-dethiobiotin + (sulfur carrier)-SH + 2 reduced [2Fe-2S]-[ferredoxin] + 2 S-adenosyl-L-methionine = (sulfur carrier)-H + biotin + 2 5'-deoxyadenosine + 2 L-methionine + 2 oxidized [2Fe-2S]-[ferredoxin]. It functions in the pathway cofactor biosynthesis; biotin biosynthesis; biotin from 7,8-diaminononanoate: step 2/2. Its function is as follows. Catalyzes the conversion of dethiobiotin (DTB) to biotin by the insertion of a sulfur atom into dethiobiotin via a radical-based mechanism. This is Biotin synthase from Rhodopseudomonas palustris (strain HaA2).